Consider the following 77-residue polypeptide: MAQKFTILFTILLVVIAAQDVMAQDATLTKLFQQYDPVCHKPCSTQDDCSGGTFCQACWRFAGTCGPYVGRAMAIGV.

Residues 1 to 32 form the signal peptide; sequence MAQKFTILFTILLVVIAAQDVMAQDATLTKLF. A Pyrrolidone carboxylic acid modification is found at Q33. 3 cysteine pairs are disulfide-bonded: C39–C55, C43–C58, and C49–C65. Residues 70 to 77 constitute a propeptide, hydrophobic peptide; sequence GRAMAIGV.

It to potato MCPI. As to expression, ovaries.

In terms of biological role, may play a defensive role against insect attacks. The polypeptide is Metallocarboxypeptidase inhibitor (Solanum lycopersicum (Tomato)).